Reading from the N-terminus, the 22-residue chain is Peptide PGLa-BM3 (22 aa).

A Leucine amide modification is found at leucine 22.

Expressed by the skin glands.

The protein localises to the secreted. Antimicrobial peptide. This is Peptide PGLa-BM3 from Xenopus boumbaensis (Mawa clawed frog).